Consider the following 1468-residue polypeptide: DNA polymerase alpha catalytic subunit A (1468 aa).

Basic and acidic residues predominate over residues 1 to 12 (MSSKSEKLEKLR). 3 disordered regions span residues 1–34 (MSSK…SDGD), 71–135 (GVEE…KKSI), and 166–205 (NLNS…PDSS). Ser-2 is modified (N-acetylserine). Ser-31 bears the Phosphoserine mark. The segment covering 71-80 (GVEEDWREVD) has biased composition (basic and acidic residues). 5 positions are modified to phosphoserine: Ser-82, Ser-83, Ser-84, Ser-169, and Ser-170. The segment covering 166–176 (NLNSSPTSEFK) has biased composition (polar residues). Thr-172 carries the post-translational modification Phosphothreonine. Residues 183–205 (NGNDESSHDAGISKKVKIDPDSS) show a composition bias toward basic and acidic residues. Phosphoserine is present on residues Ser-240 and Ser-274. The segment at 256–275 (LANPPSAQSLADEEDDEDSD) is disordered. The segment covering 266–275 (ADEEDDEDSD) has biased composition (acidic residues). Thr-309 and Thr-313 each carry phosphothreonine. Positions 813–837 (PDKEGNRSRAQKQRQNEENADAPVN) are disordered. The segment at 1246-1381 (KKYFRREGGN…CTGVMRYKYS (136 aa)) is DNA-binding. Zn(2+)-binding residues include Cys-1287, Cys-1290, Cys-1314, Cys-1317, Cys-1348, Cys-1353, Cys-1367, and Cys-1372. A CysA-type zinc finger spans residues 1287 to 1317 (CPSCDKRFPFGGIVSSNYYRVSYNGLQCKHC). The CysB motif signature appears at 1348–1372 (CDDSTCGIVTRQVSVFGKRCLNDGC).

It belongs to the DNA polymerase type-B family. DNA polymerase alpha:primase is a four subunit enzyme complex, which is assembled throughout the cell cycle, and consists of the two DNA polymerase subunits A POL1 and B POL12, and the DNA primase large PRI2 and small PRI1 subunits. Subunit B POL12 binds to subunit A POL1. POL1 interacts with CDC13, POB3, SPT16 and MCM10.

The protein resides in the nucleus. It carries out the reaction DNA(n) + a 2'-deoxyribonucleoside 5'-triphosphate = DNA(n+1) + diphosphate. Its function is as follows. Catalytic component of DNA polymerase alpha, which in complex with DNA primase (DNA polymerase alpha:primase) constitutes a replicative polymerase. POL1 has a role in promoting telomere replication during interaction with CDC13. This chain is DNA polymerase alpha catalytic subunit A (POL1), found in Saccharomyces cerevisiae (strain ATCC 204508 / S288c) (Baker's yeast).